The primary structure comprises 514 residues: Membrane-bound lytic murein transglycosylase F (514 aa).

An N-terminal signal peptide occupies residues 1 to 30; that stretch reads MKKLKINYLFIGILTLLLAAALWPSIPWFG. The segment at 31 to 269 is non-LT domain; it reads KTENHIAAIQ…RIEEKYLGHG (239 aa). Residues 270-514 form an LT domain region; that stretch reads DDFDYVDTRS…LFTPQKKEEK (245 aa). E314 is a catalytic residue.

This sequence in the N-terminal section; belongs to the bacterial solute-binding protein 3 family. The protein in the C-terminal section; belongs to the transglycosylase Slt family.

Its subcellular location is the cell outer membrane. It catalyses the reaction Exolytic cleavage of the (1-&gt;4)-beta-glycosidic linkage between N-acetylmuramic acid (MurNAc) and N-acetylglucosamine (GlcNAc) residues in peptidoglycan, from either the reducing or the non-reducing ends of the peptidoglycan chains, with concomitant formation of a 1,6-anhydrobond in the MurNAc residue.. Functionally, murein-degrading enzyme that degrades murein glycan strands and insoluble, high-molecular weight murein sacculi, with the concomitant formation of a 1,6-anhydromuramoyl product. Lytic transglycosylases (LTs) play an integral role in the metabolism of the peptidoglycan (PG) sacculus. Their lytic action creates space within the PG sacculus to allow for its expansion as well as for the insertion of various structures such as secretion systems and flagella. The sequence is that of Membrane-bound lytic murein transglycosylase F from Salmonella choleraesuis (strain SC-B67).